We begin with the raw amino-acid sequence, 214 residues long: Transmembrane emp24 domain-containing protein p24beta3 (214 aa).

The N-terminal stretch at 1–27 is a signal peptide; sequence MERRQAKIHVFVLIGLILLNSINQISS. Topologically, residues 28-178 are lumenal; that stretch reads LSVTVNDEEC…RHTNESTRKR (151 aa). Positions 35–122 constitute a GOLD domain; sequence EECVQEYVLY…PETVSFYIHV (88 aa). A coiled-coil region spans residues 140-158; that stretch reads VNVKIAELREALESVVAEQ. 2 positions are modified to omega-N-methylated arginine: R164 and R169. An N-linked (GlcNAc...) asparagine glycan is attached at N172. The chain crosses the membrane as a helical span at residues 179-199; the sequence is VIFYTVGEYIFLAAASGLQVL. Residues 200 to 214 lie on the Cytoplasmic side of the membrane; it reads YIRKLFSKSVAYNRV. Residues 204 to 205 carry the COPII vesicle coat-binding motif; sequence LF. Positions 204–214 match the COPI vesicle coat-binding motif; it reads LFSKSVAYNRV. A Required for the export from the endoplasmic reticulum to the Golgi motif is present at residues 213 to 214; that stretch reads RV.

Belongs to the EMP24/GP25L family. In terms of assembly, probably oligomerizes with other members of the EMP24/GP25L family. Associates with the COPI vesicle coat (coatomer). Associates with the COPII vesicle coat (coatomer).

The protein resides in the golgi apparatus. The protein localises to the cis-Golgi network membrane. It is found in the golgi stack membrane. In terms of biological role, involved in vesicular protein trafficking. Mainly functions in the early secretory pathway but also in post-Golgi membranes. Thought to act as cargo receptor at the lumenal side for incorporation of secretory cargo molecules into transport vesicles and to be involved in vesicle coat formation at the cytoplasmic side. The chain is Transmembrane emp24 domain-containing protein p24beta3 from Arabidopsis thaliana (Mouse-ear cress).